We begin with the raw amino-acid sequence, 430 residues long: Ribulose bisphosphate carboxylase (430 aa).

Catalysis depends on lysine 160, which acts as the Proton acceptor. Lysine 162 contributes to the substrate binding site. The Mg(2+) site is built by lysine 186, aspartate 188, and glutamate 189. Position 186 is an N6-carboxylysine (lysine 186). Histidine 278 functions as the Proton acceptor in the catalytic mechanism. Substrate contacts are provided by residues arginine 279, histidine 311, 348 to 350, and 370 to 373; these read SGG and QAGG.

It belongs to the RuBisCO large chain family. Type III subfamily. As to quaternary structure, homodimer or homodecamer. In contrast to form I RuBisCO, the form III RuBisCO is composed solely of large subunits. Mg(2+) serves as cofactor.

It carries out the reaction 2 (2R)-3-phosphoglycerate + 2 H(+) = D-ribulose 1,5-bisphosphate + CO2 + H2O. The enzyme catalyses D-ribulose 1,5-bisphosphate + O2 = 2-phosphoglycolate + (2R)-3-phosphoglycerate + 2 H(+). In terms of biological role, catalyzes the addition of molecular CO(2) and H(2)O to ribulose 1,5-bisphosphate (RuBP), generating two molecules of 3-phosphoglycerate (3-PGA). Functions in an archaeal AMP degradation pathway, together with AMP phosphorylase and R15P isomerase. The polypeptide is Ribulose bisphosphate carboxylase (Pyrococcus horikoshii (strain ATCC 700860 / DSM 12428 / JCM 9974 / NBRC 100139 / OT-3)).